The sequence spans 282 residues: MIVSGLSGSGKSVALKTFEDLDYYCSDNLPVELLPDFVKSRLRGNPIGNQRLAVGIDVRSRSDLTQLAQWRLAAQEYGIEALLLFFEASDEALIKRYADTRRRHPLSHLGLALPEAITRERQLTEPLRVQADAIIDTSTLNVHQFRRRVVTEFALGSNDRLSLLFESFAYKRGVPAEADFVFDARVLPNPHWDPELRPLTGRDAGVRNYLDNEADVRRYSTQIVDLLDTWLPRLRNDTRSYVTIAFGCTGGKHRSVYMAERMARHAREQGWPEVATFHREQD.

An ATP-binding site is contributed by 5–12 (GLSGSGKS). 57-60 (DVRS) serves as a coordination point for GTP.

This sequence belongs to the RapZ-like family.

Functionally, displays ATPase and GTPase activities. The chain is Nucleotide-binding protein PXO_02223 from Xanthomonas oryzae pv. oryzae (strain PXO99A).